Reading from the N-terminus, the 252-residue chain is Chitooligosaccharide deacetylase (252 aa).

Mg(2+)-binding residues include His61 and His125.

The protein belongs to the YdjC deacetylase family. ChbG subfamily. In terms of assembly, homodimer. The cofactor is Mg(2+).

The protein localises to the cytoplasm. It catalyses the reaction N,N'-diacetylchitobiose + H2O = N-acetyl-beta-D-glucosaminyl-(1-&gt;4)-D-glucosamine + acetate. It carries out the reaction diacetylchitobiose-6'-phosphate + H2O = N'-monoacetylchitobiose-6'-phosphate + acetate. Its pathway is glycan degradation; chitin degradation. Functionally, involved in the degradation of chitin. ChbG is essential for growth on the acetylated chitooligosaccharides chitobiose and chitotriose but is dispensable for growth on cellobiose and chitosan dimer, the deacetylated form of chitobiose. Deacetylation of chitobiose-6-P and chitotriose-6-P is necessary for both the activation of the chb promoter by the regulatory protein ChbR and the hydrolysis of phosphorylated beta-glucosides by the phospho-beta-glucosidase ChbF. Catalyzes the removal of only one acetyl group from chitobiose-6-P to yield monoacetylchitobiose-6-P, the inducer of ChbR and the substrate of ChbF. The sequence is that of Chitooligosaccharide deacetylase from Salmonella typhi.